Here is a 392-residue protein sequence, read N- to C-terminus: Spermatogenesis associated 6-like protein (392 aa).

Serine 260 and serine 263 each carry phosphoserine. A compositionally biased stretch (low complexity) spans 286–301 (SCLDSSQFGKSSSSKQ). The disordered stretch occupies residues 286–305 (SCLDSSQFGKSSSSKQGDAD).

It belongs to the SPATA6 family.

The chain is Spermatogenesis associated 6-like protein (SPATA6L) from Homo sapiens (Human).